The primary structure comprises 322 residues: UV DNA damage endonuclease (322 aa).

Belongs to the uve1/UvsE family.

Functionally, component in a DNA repair pathway. Removal of UV LIGHT damaged nucleotides. Recognizes pyrimidine dimers and cleave a phosphodiester bond immediately 5' to the lesion. In Nostoc sp. (strain PCC 7120 / SAG 25.82 / UTEX 2576), this protein is UV DNA damage endonuclease.